Consider the following 799-residue polypeptide: High affinity nerve growth factor receptor (799 aa).

The signal sequence occupies residues 1–32 (MLRGQRHGQLGWHRPAAGLGGLVTSLMLACAC). The Extracellular segment spans residues 33–418 (AASCRETCCP…DPVEKKDETP (386 aa)). 2 disulfide bridges follow: Cys36–Cys41 and Cys40–Cys50. The N-linked (GlcNAc...) asparagine glycan is linked to Asn67. LRR repeat units lie at residues 90 to 113 (LGEL…AFHF) and 116 to 137 (RLSH…TVQG). Asn121, Asn190, Asn204, Asn255, Asn264, Asn320, Asn325, Asn341, Asn361, and Asn404 each carry an N-linked (GlcNAc...) asparagine glycan. The region spanning 148–219 (NPLHCSCALL…GDDVFLQCQV (72 aa)) is the LRRCT domain. The cysteines at positions 154 and 193 are disulfide-linked. Ig-like C2-type domains lie at 196–285 (PSVK…VSVS) and 295–368 (AVEQ…LAAN). 2 cysteine pairs are disulfide-bonded: Cys217–Cys267 and Cys302–Cys348. The chain crosses the membrane as a helical span at residues 419-442 (FGVSVAVGLAVSAALFLSALLLVL). Residues 443 to 799 (NKCGQRSKFG…APPSYLDVLG (357 aa)) lie on the Cytoplasmic side of the membrane. Residues 472-493 (MTLGGSSLSPTEGKGSGLQGHI) are interaction with SQSTM1. Position 499 is a phosphotyrosine; by autocatalysis (Tyr499). A Protein kinase domain is found at 513 to 784 (IILKWELGEG…LSMKDVHARL (272 aa)). Residues 519 to 527 (LGEGAFGKV) and Lys547 contribute to the ATP site. The Proton acceptor role is filled by Asp653. A phosphotyrosine; by autocatalysis mark is found at Tyr679, Tyr683, Tyr684, and Tyr794.

This sequence belongs to the protein kinase superfamily. Tyr protein kinase family. Insulin receptor subfamily. Exists in a dynamic equilibrium between monomeric (low affinity) and dimeric (high affinity) structures. Homodimerization is induced by binding of a NGF dimer. Found in a complex, at least composed of KIDINS220, MAGI2, NTRK1 and RAPGEF2; the complex is mainly formed at late endosomes in a nerve growth factor (NGF)-dependent manner. Interacts with RAPGEF2; the interaction is strengthened after NGF stimulation. Interacts with SQSTM1; bridges NTRK1 to NGFR. Forms a ternary complex with NGFR and KIDINS220; this complex is affected by the expression levels of KIDINS220 and an increase in KIDINS220 expression leads to a decreased association of NGFR and NTRK1. Interacts (phosphorylated upon activation by NGF) with SHC1; mediates SHC1 phosphorylation and activation. Interacts (phosphorylated upon activation by NGF) with PLCG1; mediates PLCG1 phosphorylation and activation. Interacts (phosphorylated) with SH2B1 and SH2B2. Interacts with GRB2. Interacts with PIK3R1. Interacts with FRS2. Interacts with SORT1; may regulate NTRK1 anterograde axonal transport. Interacts with SH2D1A; regulates NTRK1. Interacts with NRADD. Interacts with RAB7A. Interacts with PTPRS. Interacts with USP36; USP36 does not deubiquitinate NTRK1. Interacts with GGA3. Interacts with TSPAN1; this interaction promotes NTRK1 stability. Post-translationally, ligand-mediated autophosphorylation. Interaction with SQSTM1 is phosphotyrosine-dependent. Autophosphorylation at Tyr-499 mediates interaction and phosphorylation of SHC1. In terms of processing, N-glycosylated. Ubiquitinated. Undergoes polyubiquitination upon activation; regulated by NGFR. Ubiquitination by NEDD4L leads to degradation. Ubiquitination regulates the internalization of the receptor. As to expression, isoform Trka-II is primarily expressed in neuronal cells; isoform Trka-I is found in non-neuronal tissues.

It is found in the cell membrane. Its subcellular location is the early endosome membrane. It localises to the late endosome membrane. The protein localises to the recycling endosome membrane. The enzyme catalyses L-tyrosyl-[protein] + ATP = O-phospho-L-tyrosyl-[protein] + ADP + H(+). With respect to regulation, the pro-survival signaling effect of NTRK1 in neurons requires its endocytosis into signaling early endosomes and its retrograde axonal transport. This is regulated by different proteins including CFL1, RAC1 and SORT1. NTF3 is unable to induce this signaling probably due to the lability of the NTF3-NTRK1 complex in endosomes. SH2D1A inhibits the autophosphorylation of the receptor, and alters the recruitment and activation of downstream effectors and signaling cascades. Regulated by NGFR. Receptor tyrosine kinase involved in the development and the maturation of the central and peripheral nervous systems through regulation of proliferation, differentiation and survival of sympathetic and nervous neurons. High affinity receptor for NGF which is its primary ligand. Can also bind and be activated by NTF3/neurotrophin-3. However, NTF3 only supports axonal extension through NTRK1 but has no effect on neuron survival. Upon dimeric NGF ligand-binding, undergoes homodimerization, autophosphorylation and activation. Recruits, phosphorylates and/or activates several downstream effectors including SHC1, FRS2, SH2B1, SH2B2 and PLCG1 that regulate distinct overlapping signaling cascades driving cell survival and differentiation. Through SHC1 and FRS2 activates a GRB2-Ras-MAPK cascade that regulates cell differentiation and survival. Through PLCG1 controls NF-Kappa-B activation and the transcription of genes involved in cell survival. Through SHC1 and SH2B1 controls a Ras-PI3 kinase-AKT1 signaling cascade that is also regulating survival. In absence of ligand and activation, may promote cell death, making the survival of neurons dependent on trophic factors. In Rattus norvegicus (Rat), this protein is High affinity nerve growth factor receptor (Ntrk1).